Here is a 56-residue protein sequence, read N- to C-terminus: UPF0391 membrane protein Jann_3570 (56 aa).

Helical transmembrane passes span 4–24 (WAVT…GGIA) and 29–48 (GIAQ…SLVA).

This sequence belongs to the UPF0391 family.

The protein resides in the cell membrane. The chain is UPF0391 membrane protein Jann_3570 from Jannaschia sp. (strain CCS1).